A 229-amino-acid chain; its full sequence is ATP-dependent Clp protease proteolytic subunit (229 aa).

The Nucleophile role is filled by Ser101. His126 is a catalytic residue.

This sequence belongs to the peptidase S14 family. In terms of assembly, component of the chloroplastic Clp protease core complex.

Its subcellular location is the plastid. The protein resides in the chloroplast stroma. The catalysed reaction is Hydrolysis of proteins to small peptides in the presence of ATP and magnesium. alpha-casein is the usual test substrate. In the absence of ATP, only oligopeptides shorter than five residues are hydrolyzed (such as succinyl-Leu-Tyr-|-NHMec, and Leu-Tyr-Leu-|-Tyr-Trp, in which cleavage of the -Tyr-|-Leu- and -Tyr-|-Trp bonds also occurs).. Functionally, cleaves peptides in various proteins in a process that requires ATP hydrolysis. Has a chymotrypsin-like activity. Plays a major role in the degradation of misfolded proteins. The protein is ATP-dependent Clp protease proteolytic subunit of Mesostigma viride (Green alga).